The primary structure comprises 42 residues: Photosystem II reaction center protein J (42 aa).

Residues 10–30 (IPLWLVGTVVGTLAIGLLAVF) traverse the membrane as a helical segment.

Belongs to the PsbJ family. In terms of assembly, PSII is composed of 1 copy each of membrane proteins PsbA, PsbB, PsbC, PsbD, PsbE, PsbF, PsbH, PsbI, PsbJ, PsbK, PsbL, PsbM, PsbT, PsbX, PsbY, PsbZ, Psb30/Ycf12, at least 3 peripheral proteins of the oxygen-evolving complex and a large number of cofactors. It forms dimeric complexes.

The protein resides in the plastid. It is found in the chloroplast thylakoid membrane. In terms of biological role, one of the components of the core complex of photosystem II (PSII). PSII is a light-driven water:plastoquinone oxidoreductase that uses light energy to abstract electrons from H(2)O, generating O(2) and a proton gradient subsequently used for ATP formation. It consists of a core antenna complex that captures photons, and an electron transfer chain that converts photonic excitation into a charge separation. The polypeptide is Photosystem II reaction center protein J (Chlamydomonas reinhardtii (Chlamydomonas smithii)).